The primary structure comprises 197 residues: Holliday junction branch migration complex subunit RuvA (197 aa).

Positions 1–64 (MYEYIKGKYI…EDFIGVYGFL (64 aa)) are domain I. Residues 65–143 (TKDELSMFKL…IDILEEDDEQ (79 aa)) are domain II. Residues 144–148 (TINKV) form a flexible linker region. The domain III stretch occupies residues 149–197 (TDDKKVLEAVAALITLGYSEKEANKVINSCDKNNSLEQIIKEALKYLMK).

The protein belongs to the RuvA family. Homotetramer. Forms an RuvA(8)-RuvB(12)-Holliday junction (HJ) complex. HJ DNA is sandwiched between 2 RuvA tetramers; dsDNA enters through RuvA and exits via RuvB. An RuvB hexamer assembles on each DNA strand where it exits the tetramer. Each RuvB hexamer is contacted by two RuvA subunits (via domain III) on 2 adjacent RuvB subunits; this complex drives branch migration. In the full resolvosome a probable DNA-RuvA(4)-RuvB(12)-RuvC(2) complex forms which resolves the HJ.

The protein resides in the cytoplasm. The RuvA-RuvB-RuvC complex processes Holliday junction (HJ) DNA during genetic recombination and DNA repair, while the RuvA-RuvB complex plays an important role in the rescue of blocked DNA replication forks via replication fork reversal (RFR). RuvA specifically binds to HJ cruciform DNA, conferring on it an open structure. The RuvB hexamer acts as an ATP-dependent pump, pulling dsDNA into and through the RuvAB complex. HJ branch migration allows RuvC to scan DNA until it finds its consensus sequence, where it cleaves and resolves the cruciform DNA. This chain is Holliday junction branch migration complex subunit RuvA, found in Clostridium botulinum (strain 657 / Type Ba4).